The chain runs to 424 residues: MAIQRPKGTQDLLPGVVEQWQDLEEQIRKICREYGYQEIRTPIFEATELFQRGVGETTDIVNKEMYTFLDKGDRSITLRPEGTASVCRAYVENKLHGGPQPVKLYYIGPMFRYERPQSGRFRQFHQFGVEVLGVDKPMVDAEVITLVWDLYSRLGLKGLEVHVNSVGCPSCRPEHKKKLQEFLAPRQEQLCKDCQSRFEKNPLRILDCKNPTCQEITQGAPTTLDTLCEECAEHFKELQSLLSAAEVVYKVNPRLVRGLDYYRKTAFEVLVEDIGAQSAICGGGRYDGLVQEVGGPPTPGIGFAMGMERVLAARKLAQGEQEGEGKEYLMLVALGDQAQREGFAIVSRLRKQGMPAGIDLLGRSLKAQLKAADRVQAHYAAILGEEELHKGIIILRDLRLGEQVELPLQDFEEVVWKRYKEDGN.

The protein belongs to the class-II aminoacyl-tRNA synthetase family. In terms of assembly, homodimer.

Its subcellular location is the cytoplasm. The enzyme catalyses tRNA(His) + L-histidine + ATP = L-histidyl-tRNA(His) + AMP + diphosphate + H(+). This is Histidine--tRNA ligase from Desulfitobacterium hafniense (strain DSM 10664 / DCB-2).